The sequence spans 213 residues: Thiamine import ATP-binding protein ThiQ (213 aa).

The 212-residue stretch at 1 to 212 (MIELNVTFDY…EQGRIVADQL (212 aa)) folds into the ABC transporter domain. Residue 31–38 (GESGAGKS) participates in ATP binding.

The protein belongs to the ABC transporter superfamily. Thiamine importer (TC 3.A.1.19.1) family. In terms of assembly, the complex is composed of two ATP-binding proteins (ThiQ), two transmembrane proteins (ThiP) and a solute-binding protein (ThiB).

Its subcellular location is the cell inner membrane. The catalysed reaction is thiamine(out) + ATP + H2O = thiamine(in) + ADP + phosphate + H(+). Functionally, part of the ABC transporter complex ThiBPQ involved in thiamine import. Responsible for energy coupling to the transport system. The sequence is that of Thiamine import ATP-binding protein ThiQ from Haemophilus ducreyi (strain 35000HP / ATCC 700724).